Reading from the N-terminus, the 251-residue chain is Meso-2,3-butanediol dehydrogenase (251 aa).

The NAD(+) site is built by Asn15, Met17, Asp36, Asp60, Val61, and Asn87. (R)-acetoin-binding residues include Ser138, Ser140, and Tyr151. Position 138 (Ser138) interacts with (S)-acetoin. NAD(+)-binding residues include Tyr151, Lys155, Val184, and Thr186. Tyr151 provides a ligand contact to (S)-acetoin. Tyr151 functions as the Proton acceptor in the catalytic mechanism.

Belongs to the short-chain dehydrogenases/reductases (SDR) family. Homotetramer; dimer of dimers.

The enzyme catalyses (R,S)-butane-2,3-diol + NAD(+) = (R)-acetoin + NADH + H(+). The catalysed reaction is (S,S)-butane-2,3-diol + NAD(+) = (S)-acetoin + NADH + H(+). It catalyses the reaction (S)-acetoin + NAD(+) = diacetyl + NADH + H(+). Oxidation of meso-2,3-butanediol is enhanced in the presence of Fe(2+). Reduction of diacetyl and (3S/3R)-acetoin is slightly enhanced in the presence of Mg(2+) and Mn(2+). Activity is inhibited by several metal ions, particularly Fe(3+) for reduction of diacetyl and acetoin. Its function is as follows. Catalyzes the NAD-dependent oxidation of meso-2,3-butanediol to (3R)-acetoin, and of (2S,3S)-2,3-butanediol to (3S)-acetoin, with much lower efficiency. Can also oxidize several primary alcohols such as glycerol, 1-2-pentanediol and 1,2-propanediol, with lower activity. Cannot use (2R,3R)-2,3-butanediol. In the presence of NADH, catalyzes the reduction of (3R)-acetoin to meso-2,3-butanediol, of (3S)-acetoin to (2S,3S)-2,3-butanediol and of diacetyl to (3S)-acetoin. No activity is detected with NADPH/NADP(+). The chain is Meso-2,3-butanediol dehydrogenase from Serratia marcescens.